The primary structure comprises 370 residues: tRNA 2-selenouridine synthase (370 aa).

A Rhodanese domain is found at 12 to 136; it reads FLEDVPMMDT…MRNFLLDTTR (125 aa). Catalysis depends on C95, which acts as the S-selanylcysteine intermediate.

This sequence belongs to the SelU family. As to quaternary structure, monomer.

It carries out the reaction 5-methylaminomethyl-2-thiouridine(34) in tRNA + selenophosphate + (2E)-geranyl diphosphate + H2O + H(+) = 5-methylaminomethyl-2-selenouridine(34) in tRNA + (2E)-thiogeraniol + phosphate + diphosphate. It catalyses the reaction 5-methylaminomethyl-2-thiouridine(34) in tRNA + (2E)-geranyl diphosphate = 5-methylaminomethyl-S-(2E)-geranyl-thiouridine(34) in tRNA + diphosphate. The enzyme catalyses 5-methylaminomethyl-S-(2E)-geranyl-thiouridine(34) in tRNA + selenophosphate + H(+) = 5-methylaminomethyl-2-(Se-phospho)selenouridine(34) in tRNA + (2E)-thiogeraniol. The catalysed reaction is 5-methylaminomethyl-2-(Se-phospho)selenouridine(34) in tRNA + H2O = 5-methylaminomethyl-2-selenouridine(34) in tRNA + phosphate. Its function is as follows. Involved in the post-transcriptional modification of the uridine at the wobble position (U34) of tRNA(Lys), tRNA(Glu) and tRNA(Gln). Catalyzes the conversion of 2-thiouridine (S2U-RNA) to 2-selenouridine (Se2U-RNA). Acts in a two-step process involving geranylation of 2-thiouridine (S2U) to S-geranyl-2-thiouridine (geS2U) and subsequent selenation of the latter derivative to 2-selenouridine (Se2U) in the tRNA chain. The chain is tRNA 2-selenouridine synthase from Azotobacter vinelandii (strain DJ / ATCC BAA-1303).